The following is a 933-amino-acid chain: Dual 3',5'-cyclic-AMP and -GMP phosphodiesterase 11A (933 aa).

The disordered stretch occupies residues 42-121 (HTSGQGASSL…LQRRASQKEL (80 aa)). Phosphoserine is present on residues Ser-162, Ser-163, and Ser-239. GAF domains follow at residues 217–370 (DLTS…GIAI) and 402–558 (DLEK…GLGI). Ser-424 lines the 3',5'-cyclic GMP pocket. Residues 588–912 (SKAEVDKFKA…RKWEELHQKR (325 aa)) enclose the PDEase domain. The active-site Proton donor is the His-664. Positions 668, 704, 705, and 816 each coordinate a divalent metal cation. Positions 913 to 933 (LQVSAASPDPASPMVAGEDRL) are disordered.

It belongs to the cyclic nucleotide phosphodiesterase family. It depends on a divalent metal cation as a cofactor. As to expression, expressed in testis and developing spermatoza.

The protein localises to the cytoplasm. Its subcellular location is the cytosol. The enzyme catalyses 3',5'-cyclic GMP + H2O = GMP + H(+). It carries out the reaction 3',5'-cyclic AMP + H2O = AMP + H(+). Inhibited by 3-isobutyl-1-methylxanthine (IBMX), zaprinast and dipyridamole. cGMP acts as an allosteric activator. In terms of biological role, plays a role in signal transduction by regulating the intracellular concentration of cyclic nucleotides cAMP and cGMP. Catalyzes the hydrolysis of both cAMP and cGMP to 5'-AMP and 5'-GMP, respectively. This chain is Dual 3',5'-cyclic-AMP and -GMP phosphodiesterase 11A (Pde11a), found in Mus musculus (Mouse).